Consider the following 238-residue polypeptide: Androgen-induced gene 1 protein (238 aa).

The Cytoplasmic segment spans residues 1-12 (MALVPCQVLRMA). A helical transmembrane segment spans residues 13 to 30 (ILLSYCSILCNYKAIEMP). The Extracellular portion of the chain corresponds to 31–44 (SHQTYGGSWKFLTF). The helical transmembrane segment at 45-67 (IDLVIQAVFFGICVLTDLSSLLT) threads the bilayer. The Cytoplasmic portion of the chain corresponds to 68-87 (RGSGNQEQERQLKKLISLRD). A helical membrane pass occupies residues 88–110 (WMLAVLAFPVGVFVVAVFWIIYA). Over 111-124 (YDREMIYPKLLDNF) the chain is Extracellular. Residues 125–144 (IPGWLNHGMHTTVLPFILIE) form a helical membrane-spanning segment. At 145-156 (MRTSHHQYPSRS) the chain is on the cytoplasmic side. The helical transmembrane segment at 157 to 179 (SGLTAICTFSVGYILWVCWVHHV) threads the bilayer. At 180–193 (TGMWVYPFLEHIGP) the chain is on the extracellular side. Residues 194-216 (GARIIFFGSTTILMNFLYLLGEV) form a helical membrane-spanning segment. Residues 217–238 (LNNYIWDTQKSMEEEKEKPKLE) lie on the Cytoplasmic side of the membrane.

The protein belongs to the AIG1 family. As to expression, highly expressed in heart, ovary, testis, liver, and kidney, at lower levels in spleen, prostate, brain, skeletal muscle, pancreas, small intestine and colon, and undetected in peripheral blood leukocytes, thymus, lung and placenta. AIG1 expression is higher in hair follicles from males than from females.

The protein resides in the cell membrane. The enzyme catalyses 9-hexadecanoyloxy-octadecanoate + H2O = 9-hydroxy-octadecanoate + hexadecanoate + H(+). The catalysed reaction is 12-hexadecanoyloxy-octadecanoate + H2O = 12-hydroxyoctadecanoate + hexadecanoate + H(+). It catalyses the reaction 9-(9Z-hexadecenoyloxy)-octadecanoate + H2O = (9Z)-hexadecenoate + 9-hydroxy-octadecanoate + H(+). It carries out the reaction 12-(9Z-hexadecenoyloxy)-octadecanoate + H2O = 12-hydroxyoctadecanoate + (9Z)-hexadecenoate + H(+). The enzyme catalyses 13-(9Z-hexadecenoyloxy)-octadecanoate + H2O = 13-hydroxy-octadecanoate + (9Z)-hexadecenoate + H(+). The catalysed reaction is 9-octadecanoyloxy-octadecanoate + H2O = 9-hydroxy-octadecanoate + octadecanoate + H(+). It catalyses the reaction 12-octadecanoyloxy-octadecanoate + H2O = 12-hydroxyoctadecanoate + octadecanoate + H(+). It carries out the reaction 13-octadecanoyloxy-octadecanoate + H2O = 13-hydroxy-octadecanoate + octadecanoate + H(+). The enzyme catalyses 9-(9Z-octadecenoyloxy)-octadecanoate + H2O = 9-hydroxy-octadecanoate + (9Z)-octadecenoate + H(+). The catalysed reaction is 12-(9Z-octadecenoyloxy)-octadecanoate + H2O = 12-hydroxyoctadecanoate + (9Z)-octadecenoate + H(+). It catalyses the reaction 13-(9Z-octadecenoyloxy)-octadecanoate + H2O = 13-hydroxy-octadecanoate + (9Z)-octadecenoate + H(+). It carries out the reaction 5-(9Z-hexadecenoyloxy)-octadecanoate + H2O = 5-hydroxy-octadecanoate + (9Z)-hexadecenoate + H(+). Its activity is regulated as follows. Inhibited by N-hydroxyhydantoin carbamate JJH260 and beta-lactone KC01. Hydrolyzes bioactive fatty-acid esters of hydroxy-fatty acids (FAHFAs), but not other major classes of lipids. Show a preference for FAHFAs with branching distal from the carboxylate head group of the lipids. This Homo sapiens (Human) protein is Androgen-induced gene 1 protein (AIG1).